Reading from the N-terminus, the 622-residue chain is MNKDHKQSLPAVTLAAIGVVYGDIGTSPLYTLRECLAGHYGFGVERVAVFGFLSLIFWLLILIVSLKYLLFVMRADNAGEGGILTLMSLAGRNTGAKLTPVLVIIGLIGGSFFYGEVVITPAVSVMSAIEGLQIVAPSLQEFIVPLSVVVLTLLFFIQKKGTGSVGKLFAPVMLLWFLTLGVLGVRGIIYNPEVLYALNPKWAIAFFAEYRTVSFFALGAVVLAITGVEALYADMGHFGKLPIRIAWFSAVLPSLVLNYFGQGALLLSKPAAIKNPFFLLAPDWAMIPLLILATLATVIASQAVISGVFSLTRQAVRLGYMPPMRIIHTSEMEVGQIYIPFINWLLYIAVVLVIVSFEHSSNLAAAYGIAVTGTMVLTSILSCTVARKNWHLNLLIVSVLLLALLCLDVSMFAANALKIFSGGWLPLLLGFLMFIAMITWKSERFLLLRRIHEHGNSLEALIASLEKSPPVRVPGTAVFMSRAMNVIPFALLHNLKHNKVLHERVVLLTLRTEDAPFVHNVRRVTIEALSPTFWRVVASYGFKEAPDMEEIFHSCGLEGLSCRMMETSFFMSHESLILGKRPWYLMIRGKLFMVLSRNALRAPDQYLIPPNRVIELGTQIEI.

Helical transmembrane passes span 9 to 29 (LPAV…TSPL), 52 to 72 (FLSL…LLFV), 99 to 119 (TPVL…EVVI), 137 to 157 (PSLQ…LFFI), 165 to 185 (VGKL…VLGV), 213 to 233 (VSFF…ALYA), 247 to 267 (WFSA…ALLL), 276 to 296 (PFFL…ATLA), 337 to 357 (IYIP…IVSF), 363 to 383 (LAAA…ILSC), 394 to 414 (LLIV…MFAA), and 419 to 439 (IFSG…AMIT).

It belongs to the HAK/KUP transporter (TC 2.A.72) family.

It is found in the cell inner membrane. It catalyses the reaction K(+)(in) + H(+)(in) = K(+)(out) + H(+)(out). In terms of biological role, responsible for the low-affinity transport of potassium into the cell. Likely operates as a K(+):H(+) symporter. This Sodalis glossinidius (strain morsitans) protein is Low affinity potassium transport system protein Kup.